The following is a 323-amino-acid chain: Caspase-1 (323 aa).

Positions 1-33 (MTDECVTRNYGVGIRSPNGSENRGSFIMADNTD) are excised as a propeptide. Catalysis depends on residues H154 and C196. Positions 203 to 215 (GGITLEKGVTETD) are excised as a propeptide.

This sequence belongs to the peptidase C14A family. Heterotetramer that consists of two anti-parallel arranged heterodimers, each one formed by a 22 kDa (p22) and a 13 kDa (p13) subunit.

Involved in the activation cascade of caspases responsible for apoptosis execution. Proteolytically cleaves poly(ADP-ribose) polymerase (PARP). Loss of zygotic DCP-1 function causes larval lethality and melanotic tumors. The chain is Caspase-1 (Dcp-1) from Drosophila melanogaster (Fruit fly).